The primary structure comprises 335 residues: Probable cytosolic iron-sulfur protein assembly protein Ciao1 (335 aa).

WD repeat units follow at residues 12-51 (GHKG…WSTK), 57-96 (GHKR…FECN), 101-140 (GHEN…EFEC), 146-185 (AHTQ…SDWD), 192-231 (SHTS…NDAG), 250-289 (QHSR…KRDE), and 301-335 (AHEQ…KVDD).

This sequence belongs to the WD repeat CIA1 family.

Functionally, essential component of the cytosolic iron-sulfur (Fe/S) protein assembly machinery. Required for the maturation of extramitochondrial Fe/S proteins. The protein is Probable cytosolic iron-sulfur protein assembly protein Ciao1 of Drosophila pseudoobscura pseudoobscura (Fruit fly).